Reading from the N-terminus, the 1027-residue chain is Multidrug resistance protein MdtC (1027 aa).

The next 12 membrane-spanning stretches (helical) occupy residues 16–36 (LLSL…PVAP), 333–353 (EVER…FLFL), 360–380 (LIPA…MYLC), 387–407 (LSLM…IVVL), 431–451 (VGFT…PLLL), 463–483 (FAIT…TLTP), 528–548 (WIMA…ISAP), 853–873 (LILI…LYES), 875–895 (IHPL…LLAL), 897–917 (LFDT…IGIV), 953–973 (PIIM…LSSG), and 984–1004 (ITIV…TPII).

Belongs to the resistance-nodulation-cell division (RND) (TC 2.A.6) family. MdtC subfamily. As to quaternary structure, part of a tripartite efflux system composed of MdtA, MdtB and MdtC. MdtC forms a heteromultimer with MdtB.

It localises to the cell inner membrane. The protein is Multidrug resistance protein MdtC of Proteus mirabilis (strain HI4320).